An 875-amino-acid polypeptide reads, in one-letter code: Phosphoenolpyruvate carboxylase (875 aa).

Active-site residues include H137 and K542.

It belongs to the PEPCase type 1 family. Mg(2+) serves as cofactor.

It catalyses the reaction oxaloacetate + phosphate = phosphoenolpyruvate + hydrogencarbonate. Its function is as follows. Forms oxaloacetate, a four-carbon dicarboxylic acid source for the tricarboxylic acid cycle. This chain is Phosphoenolpyruvate carboxylase, found in Pseudomonas entomophila (strain L48).